We begin with the raw amino-acid sequence, 212 residues long: Ribonuclease P protein component 3 (212 aa).

This sequence belongs to the eukaryotic/archaeal RNase P protein component 3 family. Consists of a catalytic RNA component and at least 4-5 protein subunits.

It localises to the cytoplasm. It carries out the reaction Endonucleolytic cleavage of RNA, removing 5'-extranucleotides from tRNA precursor.. In terms of biological role, part of ribonuclease P, a protein complex that generates mature tRNA molecules by cleaving their 5'-ends. In Pyrococcus abyssi (strain GE5 / Orsay), this protein is Ribonuclease P protein component 3.